A 402-amino-acid polypeptide reads, in one-letter code: GDSL esterase/lipase At1g20120 (402 aa).

The signal sequence occupies residues 1 to 35 (MLQDRVSGSLSSSKISRCVLFLSLFCFFLLTMHAS). Positions 41–69 (RVPNPGPSPAPEPKPCPSPGPNPAPATTK) are disordered. The span at 44–64 (NPGPSPAPEPKPCPSPGPNPA) shows a compositional bias: pro residues. N-linked (GlcNAc...) asparagine glycosylation occurs at asparagine 73. Serine 85 (nucleophile) is an active-site residue. 2 N-linked (GlcNAc...) asparagine glycosylation sites follow: asparagine 314 and asparagine 367. Catalysis depends on residues aspartate 375 and histidine 378.

The protein belongs to the 'GDSL' lipolytic enzyme family.

It localises to the secreted. The sequence is that of GDSL esterase/lipase At1g20120 from Arabidopsis thaliana (Mouse-ear cress).